We begin with the raw amino-acid sequence, 251 residues long: Triosephosphate isomerase (251 aa).

Residue 9–11 (NWK) participates in substrate binding. The active-site Electrophile is H95. Residue E167 is the Proton acceptor of the active site. Substrate contacts are provided by residues G173, S213, and 234 to 235 (GG).

The protein belongs to the triosephosphate isomerase family. In terms of assembly, homodimer.

The protein localises to the cytoplasm. The catalysed reaction is D-glyceraldehyde 3-phosphate = dihydroxyacetone phosphate. The protein operates within carbohydrate biosynthesis; gluconeogenesis. It participates in carbohydrate degradation; glycolysis; D-glyceraldehyde 3-phosphate from glycerone phosphate: step 1/1. Functionally, involved in the gluconeogenesis. Catalyzes stereospecifically the conversion of dihydroxyacetone phosphate (DHAP) to D-glyceraldehyde-3-phosphate (G3P). The sequence is that of Triosephosphate isomerase from Latilactobacillus sakei subsp. sakei (strain 23K) (Lactobacillus sakei subsp. sakei).